A 313-amino-acid chain; its full sequence is Type II methyltransferase M.NlaX (313 aa).

The 307-residue stretch at 2-308 (FKIIDLFAGI…EQMKAALSAV (307 aa)) folds into the SAM-dependent MTase C5-type domain. C74 is an active-site residue.

The protein belongs to the class I-like SAM-binding methyltransferase superfamily. C5-methyltransferase family.

It carries out the reaction a 2'-deoxycytidine in DNA + S-adenosyl-L-methionine = a 5-methyl-2'-deoxycytidine in DNA + S-adenosyl-L-homocysteine + H(+). Functionally, a methylase, recognizes the double-stranded sequence 5'-CCNGG-3' and methylates C-2 on both strands. May be the equivalent of dcm in this bacteria, or it may protect the DNA from cleavage by the putative NlaXP endonuclease. The chain is Type II methyltransferase M.NlaX (nlaXM) from Neisseria lactamica.